Consider the following 72-residue polypeptide: Penaeidin-2a (72 aa).

A signal peptide spans 1 to 21; sequence MRLVVCLVFLASFALVCQGEA. 3 disulfides stabilise this stretch: C45–C59, C48–C66, and C60–C67. At K71 the chain carries Lysine amide.

Higher expression in hemocytes and to a lesser extent in heart, testis, gills, intestine, lymphoid organ and hepatopancreas. Traces in eyes and subcuticular epithelium. Not present in the brain.

The protein resides in the cytoplasmic granule. Its function is as follows. Antibacterial activity against M.luteus and E.coli bacteria. Antifungal activity against N.crassa and F.oxysporum. Presents chitin-binding activity. This Penaeus vannamei (Whiteleg shrimp) protein is Penaeidin-2a.